The following is a 777-amino-acid chain: Type IV pilus biogenesis and competence protein PilQ (777 aa).

A signal peptide spans Met-1–Ala-24. Composition is skewed to low complexity over residues Ala-135 to Pro-154 and Ala-197 to Gln-233. 2 disordered regions span residues Ala-135–Thr-156 and Ala-197–Ile-236.

Belongs to the bacterial secretin family. PilQ subfamily. Homododecamer. Tetramer of trimer.

It localises to the cell outer membrane. In terms of biological role, required for type IV pilus biogenesis and competence. Could function as a pore for exit of the pilus but also as a channel for entry of heme and antimicrobial agents and uptake of transforming DNA. The polypeptide is Type IV pilus biogenesis and competence protein PilQ (pilQ) (Neisseria meningitidis serogroup B / serotype 15 (strain H44/76)).